A 255-amino-acid chain; its full sequence is Octanoyltransferase (255 aa).

A disordered region spans residues 1–21 (MCATPVSPSPESPRSAQAGAA). One can recognise a BPL/LPL catalytic domain in the interval 56–242 (FETSDEIWLV…SLIANIDGIP (187 aa)). Residues 96-103 (RGGQITYH), 173-175 (ALG), and 186-188 (GVS) each bind substrate. Cys-204 serves as the catalytic Acyl-thioester intermediate.

It belongs to the LipB family.

The protein localises to the cytoplasm. It catalyses the reaction octanoyl-[ACP] + L-lysyl-[protein] = N(6)-octanoyl-L-lysyl-[protein] + holo-[ACP] + H(+). It functions in the pathway protein modification; protein lipoylation via endogenous pathway; protein N(6)-(lipoyl)lysine from octanoyl-[acyl-carrier-protein]: step 1/2. Functionally, catalyzes the transfer of endogenously produced octanoic acid from octanoyl-acyl-carrier-protein onto the lipoyl domains of lipoate-dependent enzymes. Lipoyl-ACP can also act as a substrate although octanoyl-ACP is likely to be the physiological substrate. The protein is Octanoyltransferase of Paraburkholderia phymatum (strain DSM 17167 / CIP 108236 / LMG 21445 / STM815) (Burkholderia phymatum).